Consider the following 231-residue polypeptide: Somatolactin (231 aa).

The first 24 residues, 1–24 (MNMMTVKQQGVWAALLWPYLLTAS), serve as a signal peptide directing secretion. 3 cysteine pairs are disulfide-bonded: Cys-29/Cys-39, Cys-89/Cys-205, and Cys-222/Cys-230. A glycan (N-linked (GlcNAc...) asparagine) is linked at Asn-145.

The protein belongs to the somatotropin/prolactin family. As to expression, pituitary gland.

It is found in the secreted. This chain is Somatolactin, found in Paralichthys olivaceus (Bastard halibut).